The sequence spans 502 residues: Pyruvate kinase (502 aa).

Arg54 serves as a coordination point for substrate. K(+) is bound by residues Asn56, Ser58, Asp88, and Thr89. Residue 56 to 59 coordinates ATP; the sequence is NFSH. Residues Arg95 and Lys184 each contribute to the ATP site. Glu252 lines the Mg(2+) pocket. Residues Gly275, Asp276, and Thr308 each contribute to the substrate site. Residue Asp276 coordinates Mg(2+).

This sequence belongs to the pyruvate kinase family. In terms of assembly, homotetramer. Mg(2+) is required as a cofactor. The cofactor is K(+).

The enzyme catalyses pyruvate + ATP = phosphoenolpyruvate + ADP + H(+). It participates in carbohydrate degradation; glycolysis; pyruvate from D-glyceraldehyde 3-phosphate: step 5/5. Its activity is regulated as follows. Regulated by phosphoenolpyruvate substrate and is allosterically activated by ribose-5-phosphate, AMP and other nucleoside monophosphates but not by fructose-1,6-bisphosphate. This is Pyruvate kinase (pyk) from Lactococcus lactis subsp. lactis (strain IL1403) (Streptococcus lactis).